The primary structure comprises 560 residues: Phosphoglucomutase 1 (560 aa).

Residues Arg24 and Ser116 each coordinate alpha-D-glucose 1,6-bisphosphate. Ser116 (phosphoserine intermediate) is an active-site residue. The Mg(2+) site is built by Ser116, Asp288, Asp290, and Asp292. Residue Ser116 is modified to Phosphoserine. The alpha-D-glucose 1,6-bisphosphate site is built by Asp292, Arg293, Thr357, Glu376, Ser378, and Lys389.

This sequence belongs to the phosphohexose mutase family. Monomer. Requires Mg(2+) as cofactor. As to expression, localized primarily to fat bodies in third instar larvae.

It carries out the reaction alpha-D-glucose 1-phosphate = alpha-D-glucose 6-phosphate. The catalysed reaction is O-phospho-L-seryl-[protein] + alpha-D-glucose 1-phosphate = alpha-D-glucose 1,6-bisphosphate + L-seryl-[protein]. It catalyses the reaction alpha-D-glucose 1,6-bisphosphate + L-seryl-[protein] = O-phospho-L-seryl-[protein] + alpha-D-glucose 6-phosphate. Its function is as follows. Catalyzes the reversible isomerization of alpha-D-glucose 1-phosphate to alpha-D-glucose 6-phosphate. The mechanism proceeds via the intermediate compound alpha-D-glucose 1,6-bisphosphate. This enzyme participates in both the breakdown and synthesis of glucose. Enzyme of the glycolytic pathway. Glycolysis is essential in glial cells but not in neurons; neurons rely on the citric acid cycle for their energy needs, and on lactate and alanine secreted into the hemolymph by glial cells to fuel it. In Drosophila melanogaster (Fruit fly), this protein is Phosphoglucomutase 1.